A 473-amino-acid chain; its full sequence is Photosystem II CP43 reaction center protein (473 aa).

Residues 1-14 constitute a propeptide that is removed on maturation; sequence MKILYSPRRFYPVE. Thr-15 bears the N-acetylthreonine mark. Position 15 is a phosphothreonine (Thr-15). 5 consecutive transmembrane segments (helical) span residues 69 to 93, 134 to 155, 178 to 200, 255 to 275, and 291 to 312; these read LFEV…PHLA, LIGP…KDKN, KALY…REIT, KPFA…LSYS, and WFNN…ASQA. Residue Glu-367 coordinates [CaMn4O5] cluster. A helical membrane pass occupies residues 447–471; sequence RARAAAAGFEKGIDRDTEPVLSMTP.

This sequence belongs to the PsbB/PsbC family. PsbC subfamily. In terms of assembly, PSII is composed of 1 copy each of membrane proteins PsbA, PsbB, PsbC, PsbD, PsbE, PsbF, PsbH, PsbI, PsbJ, PsbK, PsbL, PsbM, PsbT, PsbX, PsbY, PsbZ, Psb30/Ycf12, at least 3 peripheral proteins of the oxygen-evolving complex and a large number of cofactors. It forms dimeric complexes. Binds multiple chlorophylls and provides some of the ligands for the Ca-4Mn-5O cluster of the oxygen-evolving complex. It may also provide a ligand for a Cl- that is required for oxygen evolution. PSII binds additional chlorophylls, carotenoids and specific lipids. is required as a cofactor.

The protein resides in the plastid. It localises to the chloroplast thylakoid membrane. One of the components of the core complex of photosystem II (PSII). It binds chlorophyll and helps catalyze the primary light-induced photochemical processes of PSII. PSII is a light-driven water:plastoquinone oxidoreductase, using light energy to abstract electrons from H(2)O, generating O(2) and a proton gradient subsequently used for ATP formation. The polypeptide is Photosystem II CP43 reaction center protein (Adiantum capillus-veneris (Maidenhair fern)).